A 154-amino-acid polypeptide reads, in one-letter code: Transcriptional repressor NrdR (154 aa).

A zinc finger spans residues 3–34 (CPFCRHPDSRVVDSREADEGQAIRRRRSCPEC). Positions 46-136 (LAVVKRSGVT…VYRGFSSAED (91 aa)) constitute an ATP-cone domain.

The protein belongs to the NrdR family. The cofactor is Zn(2+).

Its function is as follows. Negatively regulates transcription of bacterial ribonucleotide reductase nrd genes and operons by binding to NrdR-boxes. This Mycobacteroides abscessus (strain ATCC 19977 / DSM 44196 / CCUG 20993 / CIP 104536 / JCM 13569 / NCTC 13031 / TMC 1543 / L948) (Mycobacterium abscessus) protein is Transcriptional repressor NrdR.